A 275-amino-acid chain; its full sequence is Hydroxyethylthiazole kinase (275 aa).

M50 contributes to the substrate binding site. 2 residues coordinate ATP: R126 and S171. A200 contacts substrate.

It belongs to the Thz kinase family. Mg(2+) serves as cofactor.

It carries out the reaction 5-(2-hydroxyethyl)-4-methylthiazole + ATP = 4-methyl-5-(2-phosphooxyethyl)-thiazole + ADP + H(+). Its pathway is cofactor biosynthesis; thiamine diphosphate biosynthesis; 4-methyl-5-(2-phosphoethyl)-thiazole from 5-(2-hydroxyethyl)-4-methylthiazole: step 1/1. In terms of biological role, catalyzes the phosphorylation of the hydroxyl group of 4-methyl-5-beta-hydroxyethylthiazole (THZ). The sequence is that of Hydroxyethylthiazole kinase from Acinetobacter baumannii (strain SDF).